Here is an 82-residue protein sequence, read N- to C-terminus: RNA-binding protein Hfq (82 aa).

Residues 11–71 (DTFLNHVRKT…ISTIMPGAPI (61 aa)) form the Sm domain.

This sequence belongs to the Hfq family. In terms of assembly, homohexamer.

Its function is as follows. RNA chaperone that binds small regulatory RNA (sRNAs) and mRNAs to facilitate mRNA translational regulation in response to envelope stress, environmental stress and changes in metabolite concentrations. Also binds with high specificity to tRNAs. The protein is RNA-binding protein Hfq of Rhodopseudomonas palustris (strain TIE-1).